A 462-amino-acid chain; its full sequence is MQLRKMQTIKKEPAPLDPTSSSDKMLLLNSALAEVAEDLASGEDLLLNEGSMGKNKSSACRRKREFIPDEKKDAMYWEKRRKNNEAAKRSREKRRLNDLVLENKLIALGEENATLKAELLSLKLKFGLISSTAYAQEIQKLSNSTAVYFQDYQTSKAAVSSFVDEHEPAMVAGSCISVIKHSPQSSLSDVSEVSSVEHTQESPAQGGCRSPENKFPVIKQEPVELESFAREAREERGTYSTSIYQSYMGSSFSTYSHSPPLLQVHGSTSNSPRTSEADEGVVGKSSDGEDEQQVPKGPIHSPVELQRVHATVVKVPEVNPSALPHKLRIKAKAMQVKVEALDSEFEGMQKLSSPADAIAKRHFDLEKHGTSGMAHSSLPPFSVQVTNIQDWSLKSEHWHHKELSSKTQSSFKTGVVEVKDGGYKVSEAENLYLKQGIANLSAEVVSLKRFIATQPISASDSR.

A disordered region spans residues 1–22 (MQLRKMQTIKKEPAPLDPTSSS). A Glycyl lysine isopeptide (Lys-Gly) (interchain with G-Cter in SUMO2) cross-link involves residue Lys24. A bZIP domain is found at 73–136 (DAMYWEKRRK…GLISSTAYAQ (64 aa)). Positions 79–95 (KRRKNNEAAKRSREKRR) are basic motif. Positions 99-106 (LVLENKLI) are leucine-zipper. Residues 188 to 214 (SDVSEVSSVEHTQESPAQGGCRSPENK) are disordered. A Glycyl lysine isopeptide (Lys-Gly) (interchain with G-Cter in SUMO2) cross-link involves residue Lys214. Lys219 is covalently cross-linked (Glycyl lysine isopeptide (Lys-Gly) (interchain with G-Cter in SUMO1); alternate). Residue Lys219 forms a Glycyl lysine isopeptide (Lys-Gly) (interchain with G-Cter in SUMO2); alternate linkage. Residues 259–298 (PPLLQVHGSTSNSPRTSEADEGVVGKSSDGEDEQQVPKGP) form a disordered region. Over residues 265-274 (HGSTSNSPRT) the composition is skewed to polar residues. The segment at 281-420 (VVGKSSDGED…FKTGVVEVKD (140 aa)) is necessary for transcriptional repression and sufficient for interaction with PER2. Ser301 carries the post-translational modification Phosphoserine. Glycyl lysine isopeptide (Lys-Gly) (interchain with G-Cter in SUMO2) cross-links involve residues Lys314, Lys326, Lys332, Lys337, and Lys350. Ser353 carries the post-translational modification Phosphoserine. Glycyl lysine isopeptide (Lys-Gly) (interchain with G-Cter in SUMO2) cross-links involve residues Lys360, Lys394, Lys401, Lys406, Lys412, Lys419, Lys424, Lys434, and Lys448.

The protein belongs to the bZIP family. NFIL3 subfamily. Homodimer. Binds DNA as a dimer. Interacts with DR1. Interacts with PER2 and CRY2. Interacts with NR0B2. Interacts with NR1D1. Interacts with MYSM1. In terms of tissue distribution, expressed in suprachiasmatic nucleus and liver (at protein level). Expressed in suprachiasmatic nucleus, hippocampus, gyrus dentatus, piriform cortex, internal granular layer of olfactory bulb, dorsomedial hypothalamic nucleus, pontine nuclei, granular layer of cerebellum, liver and calvariae osteoblasts. Expressed in natural killer cell precursors in bone marrow.

It is found in the nucleus. Functionally, acts as a transcriptional regulator that recognizes and binds to the sequence 5'-[GA]TTA[CT]GTAA[CT]-3', a sequence present in many cellular and viral promoters. Represses transcription from promoters with activating transcription factor (ATF) sites. Represses promoter activity in osteoblasts. Represses transcriptional activity of PER1. Represses transcriptional activity of PER2 via the B-site on the promoter. Activates transcription from the interleukin-3 promoter in T-cells. Competes for the same consensus-binding site with PAR DNA-binding factors (DBP, HLF and TEF). Component of the circadian clock that acts as a negative regulator for the circadian expression of PER2 oscillation in the cell-autonomous core clock. Protects pro-B cells from programmed cell death. Represses the transcription of CYP2A5. Positively regulates the expression and activity of CES2 by antagonizing the repressive action of NR1D1 on CES2. Required for the development of natural killer cell precursors. The chain is Nuclear factor interleukin-3-regulated protein (Nfil3) from Mus musculus (Mouse).